The primary structure comprises 276 residues: MGIKKYNPTTNGRRNMTTNDFAEITTDRPEKSLLAPLSKKAGRNNQGKITVRHQGGGHKRQYRIIDFKRNKDGIPGRVATIEYDPNRSANIALINYVDGEKRYILAPKSLEVGMEVMSGPEADIKIGNALPLINIPVGTVVHNIELKPGRGGQLVRSAGTSAQVLGKEGKYVLVRLTSGEVRLVLSACRASIGQVGNEQHELIKIGKAGRSRWLGKRPTVRGSVMNPVDHPHGGGEGRSPIGRKSPMSPWGKPTLGFKTRKKNKASDKFIVRRRKK.

Disordered stretches follow at residues 1–20 (MGIK…TTND) and 219–276 (TVRG…RRKK). A compositionally biased stretch (polar residues) spans 7 to 20 (NPTTNGRRNMTTND).

This sequence belongs to the universal ribosomal protein uL2 family. Part of the 50S ribosomal subunit. Forms a bridge to the 30S subunit in the 70S ribosome.

One of the primary rRNA binding proteins. Required for association of the 30S and 50S subunits to form the 70S ribosome, for tRNA binding and peptide bond formation. It has been suggested to have peptidyltransferase activity; this is somewhat controversial. Makes several contacts with the 16S rRNA in the 70S ribosome. This Bacillus cereus (strain G9842) protein is Large ribosomal subunit protein uL2.